The primary structure comprises 175 residues: Deoxyuridine 5'-triphosphate nucleotidohydrolase (175 aa).

Substrate contacts are provided by residues 67–69 (RSG), N80, 84–86 (TVD), and K94. The interval 138 to 175 (RAEGGFGSTGGHAAVGADTNGQQGGNRYASVVSDRKGQ) is disordered.

It belongs to the dUTPase family. Mg(2+) is required as a cofactor.

The catalysed reaction is dUTP + H2O = dUMP + diphosphate + H(+). Its pathway is pyrimidine metabolism; dUMP biosynthesis; dUMP from dCTP (dUTP route): step 2/2. Its function is as follows. This enzyme is involved in nucleotide metabolism: it produces dUMP, the immediate precursor of thymidine nucleotides and it decreases the intracellular concentration of dUTP so that uracil cannot be incorporated into DNA. The protein is Deoxyuridine 5'-triphosphate nucleotidohydrolase of Streptomyces avermitilis (strain ATCC 31267 / DSM 46492 / JCM 5070 / NBRC 14893 / NCIMB 12804 / NRRL 8165 / MA-4680).